The chain runs to 152 residues: Putative superoxide dismutase [Cu-Zn] (152 aa).

Cu cation-binding residues include His-43, His-45, and His-60. Cys-54 and Cys-144 are joined by a disulfide. 4 residues coordinate Zn(2+): His-60, His-68, His-77, and Asp-80. His-118 is a Cu cation binding site.

The protein belongs to the Cu-Zn superoxide dismutase family. Cu cation is required as a cofactor. The cofactor is Zn(2+).

The catalysed reaction is 2 superoxide + 2 H(+) = H2O2 + O2. In terms of biological role, destroys radicals which are normally produced within the cells and which are toxic to biological systems. The protein is Putative superoxide dismutase [Cu-Zn] (SOD) of Orgyia pseudotsugata (Douglas-fir tussock moth).